The following is a 1705-amino-acid chain: MRPLILLAALLWLQDSLAQEDVCSSLDGSPDRQGGGPPLSVSVTSRGRPTSLFLSWVAAEPGGFDYALCLRAMNLSGFPEGQQLQAHTNESSFEFHGLVPGSRYQLELTVLRPCWQNVTITLTARTAPTVVRGLQLHSTGSPASLEASWSDASGDQDSYQLLLYHPESHTLACNVSVSPDTLSYNFGDLLPGSQYVLEVITWAGSLHAKTSILQWTEPVPPDHLRVRALGTSSLQAFWNSSEGATWFHLILTDLLEGTNLTKVVRQGISTHTFLRLSPGTPYQLKICAAAGPHQIWGPNATEWTYPSYPSDLVLTPLWNELWASWKAGQGARDGYVLKLSGPVENTTTLGPEECNAVFPGPLPPGHYTLGLRVLAGPYDAWVEGSIWLAESAARPMEVPGARLWLEGLEATKQPGRRALLYSVDAPGLLGNISVSSGATHVTFCGLVPGAHYRVDIASSMGDITQSLTGYTSPLPPQSLEIISRNSPSDLTIGWAPAPGQMEGYKVTWHQDGSQRSPGDLVDLGPDISSLTLKSLVPGSCYTVSAWAWSGNLSSDSQKIHSCTRPAPPTNLSLGFAHQPATLRASWCHPPGGRDAFQLRLYRLRPLTLESEKILSQEAQNFSWAQLPAGYEFQVQLSTLWGSEESGSANTTGWTPPSAPTLVNVTSEAPTQLHVSWVHAAGDRSSYQVTLYQESTRTATSIVGPKADSTSFWGLTPGTKYKVEAISWAGPLYTAAANVSAWTYPLTPNELLASMQAGSAVVNLAWPSGPLGRGTCHAQLSDAGHLSWEQPLSLGQDLLMLRNLIPGHTVSLSVKCRAGPLQASTHPLVLSVEPGPVEDVFCQPEATYLSLNWTMPTGDVAVCLVEVEQLVPGGSAHFVFQVNTSEDALLLPNLTPTTSYRLSLTVLGGNRQWSRAVTLVCTTSAEVWHPPELAEAPQVELGTGMGVTVTRGMFGKDDGQIQWYGIIATINMTLAQPSQEAINHTWYDHYYRGHDSYLALLFPNPFYPEPWAVPRSWTVPVGTEDCDNTQEICNGHLKPGFQYRFSIAAFSRLSSPETILAFSAFSEPQASISLVAMPLTVMMGTVVGCIIIVCAVLCLLCRRGLKGPRSEKNGFSQELMPYNLWRTHRPIPSHSFRQSYEAKSARAHQAFFQEFEELKEVGKDQPRLEAEHPANITKNRYPHVLPYDHSRVRLTQLSGEPHSDYINANFIPGYSHPQEIIATQGPLKKTVEDFWRLVWEQQVHVIIMLTVGMENGRVLCEHYWPVNSTPVTHGHITTHLLAEESEDEWTRREFQLQHGAEQKQRRVKQLQFTTWPDHSVPEAPSSLLAFVELVQEEVKATQGKGPILVHCSAGVGRTGTFVALLPAVRQLEEEQVVDVFNTVYILRLHRPLMIQTLSQYIFLHSCLLNKILEGPSDASDSGPIPVMNFAQACAKRAANANAGFLKEYRLLKQAIKDETGSLLPSPDYNQNSIASCHHSQEQLALVEESPADNMLAASLFPGGPSGRDHVVLTGSAGPKELWEMVWEHGAYVLVSLGLPDTKEKPQDIWPMEMQPIVTDMVTVHRVAESNTAGWPSTLIRVIHGDSGTERQVQCLQFPHCETGSELPANTLLTFLDAVGQCCSRGNSKKPGTLLSHSSKVTNQLSTFLAMEQLLQQAGTERTVDVFSVALKQTQACAVKTPTLEQYIYLYNCLNSALRNRLPRARK.

Positions M1–A18 are cleaved as a signal peptide. At Q19 to P1077 the chain is on the extracellular side. A disordered region spans residues S24–T44. 10 consecutive Fibronectin type-III domains span residues P37–T129, V130–D222, P218–Y305, P306–L388, A393–V454, P475–T569, P565–T654, P655–E749, P744–V831, and E832–V926. N-linked (GlcNAc...) asparagine glycans are attached at residues N74, N89, N117, N174, N239, N259, N299, N345, N431, N551, N570, N620, N649, N663, and N737. N851, N882, N970, and N982 each carry an N-linked (GlcNAc...) asparagine glycan. A helical transmembrane segment spans residues L1078–C1100. Residues R1101–K1705 are Cytoplasmic-facing. Tyrosine-protein phosphatase domains follow at residues F1150–K1409 and N1427–A1695. Substrate contacts are provided by residues D1316, C1350 to R1356, and Q1394. C1350 functions as the Phosphocysteine intermediate in the catalytic mechanism.

This sequence belongs to the protein-tyrosine phosphatase family. Receptor class 3 subfamily.

Its subcellular location is the membrane. It catalyses the reaction O-phospho-L-tyrosyl-[protein] + H2O = L-tyrosyl-[protein] + phosphate. Its function is as follows. Protein tyrosine phosphatase that acts as a regulator of energy metabolism by mediating dephosphorylation of insulin receptor (Insr). Prevents decarboxylation of osteocalcin (Bglap and Bglap2) via an indirect mechanism: dephosphorylation of insulin receptor prevents insulin signaling-dependent decarboxylation of osteocalcin, preventing the hormone activity of osteocalcin. May play a role in the maintenance of pluripotency. The chain is Receptor-type tyrosine-protein phosphatase V (Ptprv) from Mus musculus (Mouse).